A 255-amino-acid chain; its full sequence is GTP cyclohydrolase III 1 (255 aa).

It belongs to the archaeal-type GTP cyclohydrolase family.

It carries out the reaction GTP + 3 H2O = 2-amino-5-formylamino-6-(5-phospho-D-ribosylamino)pyrimidin-4(3H)-one + 2 phosphate + 2 H(+). Functionally, catalyzes the formation of 2-amino-5-formylamino-6-ribofuranosylamino-4(3H)-pyrimidinone ribonucleotide monophosphate and inorganic phosphate from GTP. Also has an independent pyrophosphate phosphohydrolase activity. The protein is GTP cyclohydrolase III 1 (gch31) of Halobacterium salinarum (strain ATCC 700922 / JCM 11081 / NRC-1) (Halobacterium halobium).